Reading from the N-terminus, the 230-residue chain is Phosphoglycerate mutase-like protein 4 (230 aa).

Histidine 21 serves as the catalytic Tele-phosphohistidine intermediate. Glutamate 96 acts as the Proton donor/acceptor in catalysis.

The protein belongs to the phosphoglycerate mutase family.

Functionally, may play a role in carbohydrates metabolism. This chain is Phosphoglycerate mutase-like protein 4, found in Arabidopsis thaliana (Mouse-ear cress).